We begin with the raw amino-acid sequence, 425 residues long: Inositol hexakisphosphate kinase 2 (425 aa).

ATP contacts are provided by residues 206-208 (ENL) and aspartate 219. Substrate is bound by residues 215–223 (PCVLDLKMG), lysine 221, and 235–242 (KAANQIRK). Aspartate 382 contacts ATP. Histidine 385 contributes to the substrate binding site.

Belongs to the inositol phosphokinase (IPK) family. Highly expressed in small intestine.

Its subcellular location is the nucleus. It carries out the reaction 1D-myo-inositol hexakisphosphate + ATP = 5-diphospho-1D-myo-inositol 1,2,3,4,6-pentakisphosphate + ADP. It functions in the pathway phospholipid metabolism; phosphatidylinositol metabolism. Functionally, converts inositol hexakisphosphate (InsP6) to diphosphoinositol pentakisphosphate (InsP7/PP-InsP5). The polypeptide is Inositol hexakisphosphate kinase 2 (Ip6k2) (Rattus norvegicus (Rat)).